A 256-amino-acid chain; its full sequence is Small ribosomal subunit protein uS2 (256 aa).

The protein belongs to the universal ribosomal protein uS2 family.

In Methylococcus capsulatus (strain ATCC 33009 / NCIMB 11132 / Bath), this protein is Small ribosomal subunit protein uS2.